The sequence spans 115 residues: uncharacterized protein (115 aa).

An N-terminal signal peptide occupies residues 1–20 (MKTFFRTVLFGSLMAVCANS).

This is an uncharacterized protein from Escherichia coli O6:H1 (strain CFT073 / ATCC 700928 / UPEC).